The sequence spans 529 residues: Listeriolysin O (529 aa).

Positions 1–24 (MKKIMLVFITLILVSLPIAQQTEA) are cleaved as a signal peptide. A run of 4 beta stranded transmembrane segments spans residues 214–227 (ESQL…AFKA), 234–243 (VNFGAISEGK), 312–321 (STKVKAAFDA), and 329–341 (SGDV…IKNS). Residues 483 to 493 (ECTGLAWEWWR) carry the Conserved undecapeptide motif. Positions 515 to 516 (TL) match the Cholesterol binding motif.

The protein belongs to the cholesterol-dependent cytolysin family. In terms of assembly, homooligomeric pore complex of 35 to 50 subunits; when inserted in the host membrane.

It is found in the secreted. The protein resides in the host membrane. Its subcellular location is the host cell membrane. Activity of listeriolysin O is regulated on multiple levels. It should be high in the phagosome, thereby allowing escape of the bacteria from the phagosomal compartment. Then, once inside the host cytosol, the activity must be controlled to prevent lysis of the host plasma membrane and loss of the intracellular environment. In terms of biological role, a cholesterol-dependent toxin that causes cytolysis by forming pores in cholesterol containing host membranes. After binding to target membranes, the protein undergoes a major conformation change, leading to its insertion in the host membrane and formation of an oligomeric pore complex. Cholesterol is required for binding to host membranes, membrane insertion and pore formation; cholesterol binding is mediated by a Thr-Leu pair in the C-terminus. Acts as a major virulence factor required for the escape of bacteria from phagosomal vacuoles and entry into the host cytosol. Can be reversibly inactivated by oxidation. This chain is Listeriolysin O (hly), found in Listeria monocytogenes serotype 4b (strain F2365).